The following is a 119-amino-acid chain: Beta-2-microglobulin (119 aa).

Positions 1-20 (MFRSVALAVLALLFLSGLEA) are cleaved as a signal peptide. The region spanning 25–114 (PKIQVYSRHP…VTLSGPRTVK (90 aa)) is the Ig-like C1-type domain. Residues C45 and C100 are joined by a disulfide bond.

The protein belongs to the beta-2-microglobulin family. In terms of assembly, heterodimer of an alpha chain and a beta chain. Beta-2-microglobulin is the beta-chain of major histocompatibility complex class I molecules.

It is found in the secreted. Its function is as follows. Component of the class I major histocompatibility complex (MHC). Involved in the presentation of peptide antigens to the immune system. The polypeptide is Beta-2-microglobulin (B2M) (Chlorocebus aethiops (Green monkey)).